We begin with the raw amino-acid sequence, 956 residues long: Calsyntenin-3 (956 aa).

Residues 1 to 20 (MARMSFLSFLLFCLTSVAHG) form the signal peptide. The Extracellular segment spans residues 21–850 (NKANKHKPWI…PHRNSVVPGA (830 aa)). Cadherin domains follow at residues 30-151 (IETE…SPVF) and 152-271 (VERR…IPLF). N-linked (GlcNAc...) asparagine glycans are attached at residues N333, N353, N513, and N743. Residues 851–871 (ATVIIMVCVGFLVVMVILGVF) form a helical membrane-spanning segment. Over 872-956 (RIRSIHRRGE…EGRDSAPRRY (85 aa)) the chain is Cytoplasmic. Residues 921 to 937 (GECEDEEEVVDSPDDTS) show a composition bias toward acidic residues. Positions 921 to 956 (GECEDEEEVVDSPDDTSDDQRIIIKKEGRDSAPRRY) are disordered. The span at 938 to 956 (DDQRIIIKKEGRDSAPRRY) shows a compositional bias: basic and acidic residues.

Belongs to the calsyntenin family. Homooligomer and heterooligomer; mediates both homophilic and heterophilc interactions with clstn1 and clstn2 paralogs via cadherin domains. Interacts (via cadherin domains) with both alpha and beta isoforms of neurexins. In terms of tissue distribution, by 48 hours post-fertilization (hpf), widely expressed in the brain, with strong expression in the telencephalon and the midbrain. Not expressed in the optic tectum.

The protein localises to the postsynaptic cell membrane. It localises to the endoplasmic reticulum membrane. It is found in the golgi apparatus membrane. Its function is as follows. Synaptic adhesion molecule. Promotes synapse development by acting as a cell adhesion molecule at the postsynaptic membrane, which associates with presynaptic neurexins. This is Calsyntenin-3 from Danio rerio (Zebrafish).